A 48-amino-acid chain; its full sequence is Large ribosomal subunit protein bL33A (48 aa).

It belongs to the bacterial ribosomal protein bL33 family.

In Limosilactobacillus fermentum (strain NBRC 3956 / LMG 18251) (Lactobacillus fermentum), this protein is Large ribosomal subunit protein bL33A.